A 152-amino-acid polypeptide reads, in one-letter code: Endoribonuclease YbeY (152 aa).

Residues His-118, His-122, and His-128 each contribute to the Zn(2+) site.

It belongs to the endoribonuclease YbeY family. Zn(2+) serves as cofactor.

The protein resides in the cytoplasm. Its function is as follows. Single strand-specific metallo-endoribonuclease involved in late-stage 70S ribosome quality control and in maturation of the 3' terminus of the 16S rRNA. In Lacticaseibacillus paracasei (strain ATCC 334 / BCRC 17002 / CCUG 31169 / CIP 107868 / KCTC 3260 / NRRL B-441) (Lactobacillus paracasei), this protein is Endoribonuclease YbeY.